The chain runs to 186 residues: uncharacterized protein (186 aa).

The 173-residue stretch at 12–184 (LLKSPVEEDD…HIYKLSKQIR (173 aa)) folds into the N-acetyltransferase domain.

It belongs to the acetyltransferase family.

It localises to the cytoplasm. Its subcellular location is the nucleus. This is an uncharacterized protein from Schizosaccharomyces pombe (strain 972 / ATCC 24843) (Fission yeast).